Here is a 248-residue protein sequence, read N- to C-terminus: Proteasome subunit alpha type-1 (248 aa).

Belongs to the peptidase T1A family. As to quaternary structure, the 26S proteasome consists of a 20S proteasome core and two 19S regulatory subunits. The 20S proteasome core is composed of 28 subunits that are arranged in four stacked rings, resulting in a barrel-shaped structure. The two end rings are each formed by seven alpha subunits, and the two central rings are each formed by seven beta subunits. The catalytic chamber with the active sites is on the inside of the barrel.

Its subcellular location is the cytoplasm. The protein localises to the nucleus. Its function is as follows. The proteasome is a multicatalytic proteinase complex which is characterized by its ability to cleave peptides with Arg, Phe, Tyr, Leu, and Glu adjacent to the leaving group at neutral or slightly basic pH. The proteasome has an ATP-dependent proteolytic activity. This chain is Proteasome subunit alpha type-1 (psmA1), found in Dictyostelium discoideum (Social amoeba).